The following is a 341-amino-acid chain: ATPase GET3 (341 aa).

Residue 34–41 (KGGVGKTT) participates in ATP binding. Residue aspartate 63 is part of the active site. The ATP site is built by glutamate 245 and asparagine 272. Zn(2+)-binding residues include cysteine 283 and cysteine 286.

Belongs to the arsA ATPase family. Homodimer.

It localises to the cytoplasm. The protein localises to the endoplasmic reticulum. ATPase required for the post-translational delivery of tail-anchored (TA) proteins to the endoplasmic reticulum. Recognizes and selectively binds the transmembrane domain of TA proteins in the cytosol. This complex then targets to the endoplasmic reticulum by membrane-bound receptors, where the tail-anchored protein is released for insertion. This process is regulated by ATP binding and hydrolysis. ATP binding drives the homodimer towards the closed dimer state, facilitating recognition of newly synthesized TA membrane proteins. ATP hydrolysis is required for insertion. Subsequently, the homodimer reverts towards the open dimer state, lowering its affinity for the membrane-bound receptor, and returning it to the cytosol to initiate a new round of targeting. The protein is ATPase GET3 of Paracoccidioides brasiliensis (strain Pb18).